The primary structure comprises 151 residues: U-scoloptoxin(17)-Er2a (151 aa).

A signal peptide spans 1–22 (MKSFFVVFAIVFQATLVALSLA).

This sequence belongs to the scoloptoxin-17 family. Post-translationally, contains 5 disulfide bonds. As to expression, expressed by the venom gland.

The protein localises to the secreted. The protein is U-scoloptoxin(17)-Er2a of Ethmostigmus rubripes (Giant centipede).